The chain runs to 270 residues: 4-hydroxy-tetrahydrodipicolinate reductase (270 aa).

Residues 9–14 (GAGGRM) and E35 each bind NAD(+). R36 serves as a coordination point for NADP(+). NAD(+) is bound by residues 99–101 (GTT) and 123–126 (ASNF). The active-site Proton donor/acceptor is the H156. A (S)-2,3,4,5-tetrahydrodipicolinate-binding site is contributed by H157. Residue K160 is the Proton donor of the active site. 166 to 167 (GT) provides a ligand contact to (S)-2,3,4,5-tetrahydrodipicolinate.

Belongs to the DapB family.

It is found in the cytoplasm. The enzyme catalyses (S)-2,3,4,5-tetrahydrodipicolinate + NAD(+) + H2O = (2S,4S)-4-hydroxy-2,3,4,5-tetrahydrodipicolinate + NADH + H(+). It catalyses the reaction (S)-2,3,4,5-tetrahydrodipicolinate + NADP(+) + H2O = (2S,4S)-4-hydroxy-2,3,4,5-tetrahydrodipicolinate + NADPH + H(+). It participates in amino-acid biosynthesis; L-lysine biosynthesis via DAP pathway; (S)-tetrahydrodipicolinate from L-aspartate: step 4/4. Functionally, catalyzes the conversion of 4-hydroxy-tetrahydrodipicolinate (HTPA) to tetrahydrodipicolinate. The chain is 4-hydroxy-tetrahydrodipicolinate reductase from Pasteurella multocida (strain Pm70).